The sequence spans 146 residues: Hemoglobin subunit beta (146 aa).

The residue at position 1 (Val1) is an N-acetylvaline. In terms of domain architecture, Globin spans 2–146 (QLSGEEKAAV…VANALAHKYH (145 aa)). At Ser44 the chain carries Phosphoserine. Residue Lys59 is modified to N6-acetyllysine. Position 63 (His63) interacts with heme b. At Lys82 the chain carries N6-acetyllysine. His92 is a heme b binding site. Residue Cys93 is modified to S-nitrosocysteine. Lys144 is subject to N6-acetyllysine.

It belongs to the globin family. Heterotetramer of two alpha chains and two beta chains. As to expression, red blood cells.

In terms of biological role, involved in oxygen transport from the lung to the various peripheral tissues. The sequence is that of Hemoglobin subunit beta (HBB) from Equus hemionus kulan (Turkmenian kulan).